Consider the following 481-residue polypeptide: uncharacterized protein (481 aa).

Basic residues predominate over residues M1–N18. The tract at residues M1–G37 is disordered. The span at L24–R34 shows a compositional bias: polar residues. 2 helical membrane-spanning segments follow: residues S172 to I191 and A195 to W214.

It localises to the membrane. This is an uncharacterized protein from Coxiella burnetii (strain RSA 493 / Nine Mile phase I).